The chain runs to 488 residues: Multidrug resistance outer membrane protein MdtP (488 aa).

A signal peptide spans 1 to 23 (MINRQLSRLLLCSILGSTTLISG). Cysteine 24 carries N-palmitoyl cysteine lipidation. Residue cysteine 24 is the site of S-diacylglycerol cysteine attachment.

The protein belongs to the outer membrane factor (OMF) (TC 1.B.17) family. In terms of assembly, could be part of a tripartite efflux system composed of MdtN, MdtO and MdtP.

Its subcellular location is the cell outer membrane. In terms of biological role, could be involved in resistance to puromycin, acriflavine and tetraphenylarsonium chloride. The polypeptide is Multidrug resistance outer membrane protein MdtP (mdtP) (Escherichia coli O6:H1 (strain CFT073 / ATCC 700928 / UPEC)).